Here is a 177-residue protein sequence, read N- to C-terminus: DELTA-stichotoxin-Hmg2b (177 aa).

The segment at 3-12 (ALAGTIIAGA) is plays an important role in the hemolytic activity. The segment at 11 to 30 (GASLGFQILDKVLGELGKVS) is N-terminal region. Serine 54, valine 87, serine 105, proline 107, tyrosine 133, tyrosine 137, and tyrosine 138 together coordinate phosphocholine.

The protein belongs to the actinoporin family. Sea anemone subfamily. In terms of assembly, octamer or nonamer in membranes. Monomer in the soluble state.

Its subcellular location is the secreted. It localises to the nematocyst. The protein resides in the target cell membrane. Its function is as follows. Pore-forming protein that forms cations-selective hydrophilic pores of around 1 nm and causes cytolysis. Pore formation is a multi-step process that involves specific recognition of membrane sphingomyelin (but neither cholesterol nor phosphatidylcholine) using aromatic rich region and adjacent phosphocholine (POC) binding site, firm binding to the membrane (mainly driven by hydrophobic interactions) accompanied by the transfer of the N-terminal region to the lipid-water interface and finally pore formation after oligomerization of monomers This toxin shows hemolytic activity. This Heteractis magnifica (Magnificent sea anemone) protein is DELTA-stichotoxin-Hmg2b.